Reading from the N-terminus, the 652-residue chain is ATP-binding cassette sub-family G member 5 (652 aa).

The segment at 1 to 30 is disordered; sequence MSELPFLSPEGARGPHNNRGSQSSLEEGSV. At 1–384 the chain is on the cytoplasmic side; the sequence is MSELPFLSPE…RVTRNLMRNK (384 aa). Residues 18 to 30 show a composition bias toward polar residues; the sequence is NRGSQSSLEEGSV. In terms of domain architecture, ABC transporter spans 39–294; it reads LGVLNVSFSV…FNNCGYPCPE (256 aa). ATP is bound at residue 87 to 94; sequence GSSGSGKT. A helical membrane pass occupies residues 385-405; the sequence is QVVIMRLVQNLIMGLFLIFYL. One can recognise an ABC transmembrane type-2 domain in the interval 389-646; the sequence is MRLVQNLIMG…ILGMVVFKVR (258 aa). Topologically, residues 406–422 are extracellular; that stretch reads LRVQNNMLKGAVQDRVG. The chain crosses the membrane as a helical span at residues 423–443; the sequence is LLYQLVGATPYTGMLNAVNLF. Residues 444–468 are Cytoplasmic-facing; it reads PMLRAVSDQESQDGLYQKWQMLLAY. The chain crosses the membrane as a helical span at residues 469 to 490; that stretch reads VLHALPFSIVATVIFSSVCYWT. At 491-501 the chain is on the extracellular side; that stretch reads LGLYPEVARFG. A helical membrane pass occupies residues 502-522; it reads YFSAALLAPHLIGEFLTLVLL. Topologically, residues 523 to 529 are cytoplasmic; the sequence is GMVQNPN. Residues 530–550 form a helical membrane-spanning segment; sequence IVNSIVALLSISGLLIGSGFI. The Extracellular portion of the chain corresponds to 551 to 624; sequence RNIEEMPIPL…PGATSRFTTN (74 aa). Asn-585 and Asn-592 each carry an N-linked (GlcNAc...) asparagine glycan. The helical transmembrane segment at 625-645 threads the bilayer; sequence FLILYSFIPTLVILGMVVFKV. The Cytoplasmic segment spans residues 646–652; that stretch reads RDYLISR.

It belongs to the ABC transporter superfamily. ABCG family. Eye pigment precursor importer (TC 3.A.1.204) subfamily. As to quaternary structure, heterodimer with ABCG8. The cofactor is Mg(2+). In terms of processing, N-glycosylated. N-glycosylation is important for efficient export out of the endoplasmic reticulum. Detected in liver (at protein level). Expressed only in liver and intestine.

Its subcellular location is the cell membrane. It is found in the apical cell membrane. It catalyses the reaction cholesterol(in) + ATP + H2O = cholesterol(out) + ADP + phosphate + H(+). The catalysed reaction is sitosterol(in) + ATP + H2O = sitosterol(out) + ADP + phosphate + H(+). In terms of biological role, ABCG5 and ABCG8 form an obligate heterodimer that mediates Mg(2+)- and ATP-dependent sterol transport across the cell membrane. Plays an essential role in the selective transport of dietary plant sterols and cholesterol in and out of the enterocytes and in the selective sterol excretion by the liver into bile. Required for normal sterol homeostasis. The heterodimer with ABCG8 has ATPase activity. This chain is ATP-binding cassette sub-family G member 5, found in Rattus norvegicus (Rat).